Here is a 1101-residue protein sequence, read N- to C-terminus: Rho GTPase-activating protein 30 (1101 aa).

In terms of domain architecture, Rho-GAP spans 20–215 (CDLREHLQHS…FILTHVDQLF (196 aa)). 2 disordered regions span residues 305–397 (RKLP…VRAL) and 450–499 (LQPR…LEDS). Basic and acidic residues predominate over residues 309 to 319 (LRVEDREEKSS). The span at 348-367 (SSSSQPSSLMPESLESNSME) shows a compositional bias: low complexity. Residues 451–465 (QPRPSPALGPGPPGS) show a composition bias toward pro residues. Ser578 carries the phosphoserine modification. The segment at 622-848 (LGPKPINWEG…EQKSIDVETE (227 aa)) is disordered. Composition is skewed to basic and acidic residues over residues 659–677 (TRQEKEAKPRSTSDNREEA), 686–762 (EAGK…KGDD), 786–821 (EVVHKHEAEKGRESETKELRRKSDLKSREDQGHSED), and 829–844 (DDRKEGVFSKEQKSID). Ser875 is subject to Phosphoserine. 2 disordered regions span residues 878–901 (EINEQTSEMKQAPLQPSEPEGMEA) and 968–987 (CPRPGRLDGTPGEKAWGSRA). Ser996 carries the post-translational modification Phosphoserine. The segment at 1044-1076 (SRPLSCLERPPEGTEGSEPRSRLSLPPRELHPV) is disordered. The span at 1052 to 1064 (RPPEGTEGSEPRS) shows a compositional bias: basic and acidic residues.

Interacts with RHOU in a GTP-independent manner.

It localises to the cytoplasmic vesicle. In terms of biological role, GTPase-activating protein (GAP) for RAC1 and RHOA, but not for CDC42. The sequence is that of Rho GTPase-activating protein 30 (Arhgap30) from Mus musculus (Mouse).